A 386-amino-acid polypeptide reads, in one-letter code: Succinate--CoA ligase [ADP-forming] subunit beta (386 aa).

One can recognise an ATP-grasp domain in the interval 9 to 244; the sequence is KDLLTAYQLP…PSQENIRDVL (236 aa). ATP contacts are provided by residues K46, 53–55, V102, and E107; that span reads GRG. The Mg(2+) site is built by N199 and D213. Substrate-binding positions include N264 and 321–323; that span reads GIM.

It belongs to the succinate/malate CoA ligase beta subunit family. Heterotetramer of two alpha and two beta subunits. Requires Mg(2+) as cofactor.

The enzyme catalyses succinate + ATP + CoA = succinyl-CoA + ADP + phosphate. The catalysed reaction is GTP + succinate + CoA = succinyl-CoA + GDP + phosphate. It participates in carbohydrate metabolism; tricarboxylic acid cycle; succinate from succinyl-CoA (ligase route): step 1/1. Functionally, succinyl-CoA synthetase functions in the citric acid cycle (TCA), coupling the hydrolysis of succinyl-CoA to the synthesis of either ATP or GTP and thus represents the only step of substrate-level phosphorylation in the TCA. The beta subunit provides nucleotide specificity of the enzyme and binds the substrate succinate, while the binding sites for coenzyme A and phosphate are found in the alpha subunit. The polypeptide is Succinate--CoA ligase [ADP-forming] subunit beta (Chlamydia trachomatis serovar A (strain ATCC VR-571B / DSM 19440 / HAR-13)).